We begin with the raw amino-acid sequence, 214 residues long: Ribonuclease HII (214 aa).

The 189-residue stretch at 26-214 folds into the RNase H type-2 domain; sequence EIVCGVDEAG…PVRAALDLIR (189 aa). Residues Asp-32, Glu-33, and Asp-124 each contribute to the a divalent metal cation site.

This sequence belongs to the RNase HII family. Requires Mn(2+) as cofactor. Mg(2+) is required as a cofactor.

The protein localises to the cytoplasm. It catalyses the reaction Endonucleolytic cleavage to 5'-phosphomonoester.. Endonuclease that specifically degrades the RNA of RNA-DNA hybrids. This chain is Ribonuclease HII, found in Burkholderia orbicola (strain MC0-3).